We begin with the raw amino-acid sequence, 312 residues long: Homeobox-leucine zipper protein ATHB-5 (312 aa).

The disordered stretch occupies residues 1–33 (MKRSRGSSDSLSGFLPIRHSTTDKQISPRPTTT). Over residues 23–33 (DKQISPRPTTT) the composition is skewed to polar residues. The homeobox DNA-binding region spans 69–128 (AAEKKRRLGVEQVKALEKNFEIDNKLEPERKVKLAQELGLQPRQVAIWFQNRRARWKTKQ). A leucine-zipper region spans residues 129 to 164 (LERDYGVLKSNFDALKRNRDSLQRDNDSLLGQIKEL).

This sequence belongs to the HD-ZIP homeobox family. Class I subfamily. As to quaternary structure, interacts with DNA as homodimer. Widely expressed.

The protein localises to the nucleus. Probable transcription factor that acts as a positive regulator of ABA-responsiveness, mediating the inhibitory effect of ABA on growth during seedling establishment. Binds to the DNA sequence 5'-CAATNATTG-3'. In Arabidopsis thaliana (Mouse-ear cress), this protein is Homeobox-leucine zipper protein ATHB-5 (ATHB-5).